Reading from the N-terminus, the 185-residue chain is Ribosome-recycling factor (185 aa).

The disordered stretch occupies residues 142–161 (LVKDGEAGEDEGARAEKELD).

It belongs to the RRF family.

It localises to the cytoplasm. Responsible for the release of ribosomes from messenger RNA at the termination of protein biosynthesis. May increase the efficiency of translation by recycling ribosomes from one round of translation to another. This Paenarthrobacter aurescens (strain TC1) protein is Ribosome-recycling factor.